The sequence spans 427 residues: Glutamate-1-semialdehyde 2,1-aminomutase (427 aa).

K267 bears the N6-(pyridoxal phosphate)lysine mark.

This sequence belongs to the class-III pyridoxal-phosphate-dependent aminotransferase family. HemL subfamily. Homodimer. The cofactor is pyridoxal 5'-phosphate.

It is found in the cytoplasm. It catalyses the reaction (S)-4-amino-5-oxopentanoate = 5-aminolevulinate. Its pathway is porphyrin-containing compound metabolism; protoporphyrin-IX biosynthesis; 5-aminolevulinate from L-glutamyl-tRNA(Glu): step 2/2. This Desulfosudis oleivorans (strain DSM 6200 / JCM 39069 / Hxd3) (Desulfococcus oleovorans) protein is Glutamate-1-semialdehyde 2,1-aminomutase.